The following is a 333-amino-acid chain: DNA-directed RNA polymerase subunit alpha (333 aa).

The alpha N-terminal domain (alpha-NTD) stretch occupies residues 1–246; the sequence is MKKMVQIKYK…AHLQVIGDVK (246 aa). The alpha C-terminal domain (alpha-CTD) stretch occupies residues 262 to 333; it reads VEPSIHSVDI…YNVTLNRGEK (72 aa).

Belongs to the RNA polymerase alpha chain family. As to quaternary structure, homodimer. The RNAP catalytic core consists of 2 alpha, 1 beta, 1 beta' and 1 omega subunit. When a sigma factor is associated with the core the holoenzyme is formed, which can initiate transcription.

The enzyme catalyses RNA(n) + a ribonucleoside 5'-triphosphate = RNA(n+1) + diphosphate. Its function is as follows. DNA-dependent RNA polymerase catalyzes the transcription of DNA into RNA using the four ribonucleoside triphosphates as substrates. The polypeptide is DNA-directed RNA polymerase subunit alpha (Mycoplasmopsis pulmonis (strain UAB CTIP) (Mycoplasma pulmonis)).